Reading from the N-terminus, the 303-residue chain is Putative 1-phosphofructokinase (303 aa).

Residues 217 to 222 (SDGDKG) and 249 to 250 (GD) contribute to the ATP site. The active-site Proton acceptor is Asp-250.

It belongs to the carbohydrate kinase PfkB family.

It carries out the reaction beta-D-fructose 1-phosphate + ATP = beta-D-fructose 1,6-bisphosphate + ADP + H(+). Functionally, catalyzes the ATP-dependent phosphorylation of fructose-l-phosphate to fructose-l,6-bisphosphate. In Mycoplasma genitalium (strain ATCC 33530 / DSM 19775 / NCTC 10195 / G37) (Mycoplasmoides genitalium), this protein is Putative 1-phosphofructokinase (fruK).